The primary structure comprises 405 residues: Argininosuccinate synthase (405 aa).

ATP is bound by residues 10–18 and alanine 37; that span reads AYSGGLDTS. L-citrulline is bound by residues tyrosine 88 and serine 93. Glycine 118 serves as a coordination point for ATP. L-aspartate is bound by residues threonine 120, asparagine 124, and aspartate 125. Asparagine 124 contacts L-citrulline. L-citrulline contacts are provided by arginine 128, serine 179, serine 188, glutamate 264, and tyrosine 276.

This sequence belongs to the argininosuccinate synthase family. Type 1 subfamily. Homotetramer.

Its subcellular location is the cytoplasm. The catalysed reaction is L-citrulline + L-aspartate + ATP = 2-(N(omega)-L-arginino)succinate + AMP + diphosphate + H(+). The protein operates within amino-acid biosynthesis; L-arginine biosynthesis; L-arginine from L-ornithine and carbamoyl phosphate: step 2/3. The chain is Argininosuccinate synthase from Stutzerimonas stutzeri (strain A1501) (Pseudomonas stutzeri).